The chain runs to 478 residues: MGSGWSSEEEERQPLLGPGLGPAPGATRRGREAAAVLPAAGPSPGRVYGRRWLVLLLFSLLAFAQGLVWNTWGPIQNSARQAYSFTGWDIALLVLWGPIGFLPCFAFMWLLDKRGLRITVLLTSFLMVLGTGLRCIPVSDLTLKKRLIHGGQILNGLAGPTVMNAAPFLSTTWFSADERATATAIASMLSYLGGACAFLVGPLVVPAPNGTAPLLTAESSRDHIKDRIETVLYAEFGVVCLIFSATLAYFPPRPPLPPSVAAASQRLSYRRSFCRLLSNLRFLMIALAYAIPLGVFAGWSGVLDLILTPVHVSQVDAGWIGFWSIVGGCVVGIAMARFADFIRGMLKLILLLLFSGATLSSTWFTLTCLNSVTHLPLTTVTLYASCILLGVFLNSSVPIFFELFVETVYPVPEGITCGVVTFLSNMFMGVLLFFVTFYHTELSWFNWCLPGSCLLSLLLILCFRESYDRLYLDVVVSV.

The tract at residues 1 to 27 is disordered; it reads MGSGWSSEEEERQPLLGPGLGPAPGAT. Over 1 to 51 the chain is Cytoplasmic; the sequence is MGSGWSSEEEERQPLLGPGLGPAPGATRRGREAAAVLPAAGPSPGRVYGRR. Residues 15 to 16 carry the Di-leucine motif; mediates lysosomal localization motif; sequence LL. Residues 52-72 form a helical membrane-spanning segment; it reads WLVLLLFSLLAFAQGLVWNTW. The Lumenal segment spans residues 73–89; that stretch reads GPIQNSARQAYSFTGWD. A helical transmembrane segment spans residues 90–110; it reads IALLVLWGPIGFLPCFAFMWL. Over 111-117 the chain is Cytoplasmic; it reads LDKRGLR. A helical transmembrane segment spans residues 118–138; that stretch reads ITVLLTSFLMVLGTGLRCIPV. Residues 139–152 lie on the Lumenal side of the membrane; that stretch reads SDLTLKKRLIHGGQ. Residues 153–173 form a helical membrane-spanning segment; the sequence is ILNGLAGPTVMNAAPFLSTTW. Residues 174–184 lie on the Cytoplasmic side of the membrane; it reads FSADERATATA. A helical membrane pass occupies residues 185–205; the sequence is IASMLSYLGGACAFLVGPLVV. The Lumenal portion of the chain corresponds to 206–229; sequence PAPNGTAPLLTAESSRDHIKDRIE. N-linked (GlcNAc...) asparagine glycosylation is present at N209. A helical transmembrane segment spans residues 230-250; the sequence is TVLYAEFGVVCLIFSATLAYF. Over 251–281 the chain is Cytoplasmic; the sequence is PPRPPLPPSVAAASQRLSYRRSFCRLLSNLR. Residues 282–302 traverse the membrane as a helical segment; the sequence is FLMIALAYAIPLGVFAGWSGV. Residues 303–314 are Lumenal-facing; it reads LDLILTPVHVSQ. The chain crosses the membrane as a helical span at residues 315-335; it reads VDAGWIGFWSIVGGCVVGIAM. Over 336–347 the chain is Cytoplasmic; the sequence is ARFADFIRGMLK. Residues 348–368 form a helical membrane-spanning segment; sequence LILLLLFSGATLSSTWFTLTC. At 369–384 the chain is on the lumenal side; the sequence is LNSVTHLPLTTVTLYA. A helical membrane pass occupies residues 385 to 405; the sequence is SCILLGVFLNSSVPIFFELFV. Residues 406 to 414 are Cytoplasmic-facing; it reads ETVYPVPEG. A helical transmembrane segment spans residues 415 to 435; the sequence is ITCGVVTFLSNMFMGVLLFFV. Residues 436–442 lie on the Lumenal side of the membrane; that stretch reads TFYHTEL. The chain crosses the membrane as a helical span at residues 443 to 463; it reads SWFNWCLPGSCLLSLLLILCF. The Cytoplasmic portion of the chain corresponds to 464-478; the sequence is RESYDRLYLDVVVSV.

The protein belongs to the major facilitator superfamily. In terms of processing, cleaved in lysosomes by cathepsin L between Leu-214 and Ala-261, generating a N-glycosylated N-terminal and a non-glycosylated C-terminal fragment.

The protein resides in the lysosome membrane. The catalysed reaction is pyridoxine(out) + n H(+)(out) = pyridoxine(in) + n H(+)(in). Its function is as follows. Mediates H(+)-dependent pyridoxine transport. This Rattus norvegicus (Rat) protein is Solute carrier family 49 member 4 (Slc49a4).